Here is a 174-residue protein sequence, read N- to C-terminus: Small ribosomal subunit protein uS5 (174 aa).

Residues 19–82 (LREKMIAINR…EEARRNMTKI (64 aa)) form the S5 DRBM domain.

This sequence belongs to the universal ribosomal protein uS5 family. In terms of assembly, part of the 30S ribosomal subunit. Contacts proteins S4 and S8.

Functionally, with S4 and S12 plays an important role in translational accuracy. Located at the back of the 30S subunit body where it stabilizes the conformation of the head with respect to the body. This is Small ribosomal subunit protein uS5 from Albidiferax ferrireducens (strain ATCC BAA-621 / DSM 15236 / T118) (Rhodoferax ferrireducens).